The chain runs to 95 residues: MSYTIAAQVRTEIGKGSSRRLRHANKVPAVIYGPGKEAISIVFDHKDIINIQENQDFYTSELTIALEGKDVKVRVQDMQRHAFKPMIEHVDFKFA.

Belongs to the bacterial ribosomal protein bL25 family. In terms of assembly, part of the 50S ribosomal subunit; part of the 5S rRNA/L5/L18/L25 subcomplex. Contacts the 5S rRNA. Binds to the 5S rRNA independently of L5 and L18.

Its function is as follows. This is one of the proteins that binds to the 5S RNA in the ribosome where it forms part of the central protuberance. The chain is Large ribosomal subunit protein bL25 from Shewanella halifaxensis (strain HAW-EB4).